The chain runs to 637 residues: Sodium-dependent nutrient amino acid transporter 1 (637 aa).

A compositionally biased stretch (polar residues) spans 1-17 (MELKTMPQNGANAGTQH). Residues 1-39 (MELKTMPQNGANAGTQHNNNSNNKPDNNEKEAQKKEPER) form a disordered region. The Cytoplasmic portion of the chain corresponds to 1–47 (MELKTMPQNGANAGTQHNNNSNNKPDNNEKEAQKKEPERTNWSNGLE). The span at 26–39 (DNNEKEAQKKEPER) shows a compositional bias: basic and acidic residues. 3 helical membrane passes run 48–68 (FLMSCISVSVGLGNVWRFPFT), 75–95 (GAFLIPYIIVLFLIGKPMYYL), and 128–148 (TICIITYYSSLLALTVYYLFV). N-linked (GlcNAc...) asparagine glycosylation is found at asparagine 181 and asparagine 195. 9 helical membrane passes run 225 to 245 (PDWKLTIALFVSWVVIFLVIM), 254 to 274 (AAYFLALFPYVVLFALLGRAV), 303 to 323 (AVVQCFFSLAVGCGPIIMFAS), 337 to 357 (IVTTLDTLTSLLGGITIFAIL), 397 to 417 (LFSALFFFMLFVLGIGSIVAL), 443 to 463 (ICGFLMGLVYVTPGGQWILTL), 470 to 490 (TYVVFILAIFELAGIVWIYGL), 515 to 535 (FFTPIMMIVIFIYSMVTISPI), and 549 to 569 (AGWVLFAVGAAQFPLWGWWYI).

This sequence belongs to the sodium:neurotransmitter symporter (SNF) (TC 2.A.22) family.

It localises to the membrane. Unusual broad substrate spectrum amino acid:sodium cotransporter that promotes absorption of the D isomers of essential amino acids. Neutral amino acids are the preferred substrates, especially methionine and phenylalanine. The polypeptide is Sodium-dependent nutrient amino acid transporter 1 (Drosophila virilis (Fruit fly)).